A 177-amino-acid chain; its full sequence is Nucleoside triphosphate/diphosphate phosphatase (177 aa).

Arg-23 (proton donor) is an active-site residue. Mg(2+) is bound by residues Asn-87, Asp-103, Asp-105, Asp-107, Asp-120, and Glu-123.

The protein belongs to the Ntdp family. The cofactor is Mg(2+).

The enzyme catalyses a ribonucleoside 5'-triphosphate + H2O = a ribonucleoside 5'-diphosphate + phosphate + H(+). It carries out the reaction a ribonucleoside 5'-diphosphate + H2O = a ribonucleoside 5'-phosphate + phosphate + H(+). In terms of biological role, has nucleoside phosphatase activity towards nucleoside triphosphates and nucleoside diphosphates. This Streptococcus pneumoniae (strain ATCC 700669 / Spain 23F-1) protein is Nucleoside triphosphate/diphosphate phosphatase.